Reading from the N-terminus, the 284-residue chain is Ribosomal RNA small subunit methyltransferase A (284 aa).

6 residues coordinate S-adenosyl-L-methionine: N22, L24, G49, E70, D97, and N117.

The protein belongs to the class I-like SAM-binding methyltransferase superfamily. rRNA adenine N(6)-methyltransferase family. RsmA subfamily.

Its subcellular location is the cytoplasm. It carries out the reaction adenosine(1518)/adenosine(1519) in 16S rRNA + 4 S-adenosyl-L-methionine = N(6)-dimethyladenosine(1518)/N(6)-dimethyladenosine(1519) in 16S rRNA + 4 S-adenosyl-L-homocysteine + 4 H(+). In terms of biological role, specifically dimethylates two adjacent adenosines (A1518 and A1519) in the loop of a conserved hairpin near the 3'-end of 16S rRNA in the 30S particle. May play a critical role in biogenesis of 30S subunits. The protein is Ribosomal RNA small subunit methyltransferase A of Desulforapulum autotrophicum (strain ATCC 43914 / DSM 3382 / VKM B-1955 / HRM2) (Desulfobacterium autotrophicum).